A 439-amino-acid polypeptide reads, in one-letter code: 3-phosphoshikimate 1-carboxyvinyltransferase (439 aa).

3 residues coordinate 3-phosphoshikimate: lysine 27, serine 28, and arginine 32. Residue lysine 27 coordinates phosphoenolpyruvate. Residues glycine 101 and arginine 130 each contribute to the phosphoenolpyruvate site. 4 residues coordinate 3-phosphoshikimate: serine 175, glutamine 177, aspartate 326, and lysine 353. Glutamine 177 contributes to the phosphoenolpyruvate binding site. Aspartate 326 functions as the Proton acceptor in the catalytic mechanism. Residues arginine 357 and arginine 399 each contribute to the phosphoenolpyruvate site.

It belongs to the EPSP synthase family. Monomer.

The protein resides in the cytoplasm. The catalysed reaction is 3-phosphoshikimate + phosphoenolpyruvate = 5-O-(1-carboxyvinyl)-3-phosphoshikimate + phosphate. It participates in metabolic intermediate biosynthesis; chorismate biosynthesis; chorismate from D-erythrose 4-phosphate and phosphoenolpyruvate: step 6/7. In terms of biological role, catalyzes the transfer of the enolpyruvyl moiety of phosphoenolpyruvate (PEP) to the 5-hydroxyl of shikimate-3-phosphate (S3P) to produce enolpyruvyl shikimate-3-phosphate and inorganic phosphate. This chain is 3-phosphoshikimate 1-carboxyvinyltransferase, found in Synechococcus sp. (strain CC9311).